We begin with the raw amino-acid sequence, 1509 residues long: Myosin-2 heavy chain, non muscle (1509 aa).

Residues 32–85 (SDKTLAWWPTKDADRAFCHVEVTKDDGKNFTVRLENGEEKSQPKNEKNFLGVNP) form the Myosin N-terminal SH3-like domain. In terms of domain architecture, Myosin motor spans 89–787 (DGVEDMGELG…QLAAIEELRE (699 aa)). At Lys133 the chain carries N6,N6,N6-trimethyllysine. 182-189 (GESGAGKT) is a binding site for ATP. A disordered region spans residues 623–643 (APAEEEKAAAGGSRNRSTGRG). Actin-binding regions lie at residues 660-682 (LAHL…IPNL) and 766-780 (RFGV…GQLA). The region spanning 790-819 (ISKMVVSIQAGARAFLARRMYDKMREQTVS) is the IQ domain. Positions 848-1226 (LISQRNFQKE…AERDSGAQQR (379 aa)) are alpha-helical tailpiece (S2). A coiled-coil region spans residues 848–1509 (LISQRNFQKE…VRAGSARAEE (662 aa)). Basic and acidic residues-rich tracts occupy residues 958–1019 (ELKA…KDAL), 1034–1047 (KNTE…RNEL), 1097–1107 (EDARSEVDSLK), 1115–1141 (KSLK…RANV), and 1179–1189 (QVDETKRRLEE). 6 disordered regions span residues 958–1049 (ELKA…ELDD), 1068–1141 (LAQT…RANV), 1170–1195 (AAQA…ASAA), 1213–1259 (ADLD…RLEG), 1352–1425 (VAKE…NREL), and 1474–1509 (QLQD…RAEE). Residues 1227-1252 (RKLNTRISELQSELENAPKTGGASSE) form a hinge region. The segment covering 1231 to 1240 (TRISELQSEL) has biased composition (polar residues). An alpha-helical tailpiece (LMM) region spans residues 1253 to 1482 (EVKRLEGELE…AQLQDEIDGT (230 aa)). The tract at residues 1253 to 1509 (EVKRLEGELE…VRAGSARAEE (257 aa)) is light meromyosin (LMM). A nonhelical tailpiece region spans residues 1483-1509 (PSSRGGSTRGASARGASVRAGSARAEE). Over residues 1484–1509 (SSRGGSTRGASARGASVRAGSARAEE) the composition is skewed to low complexity. 3 positions are modified to phosphoserine: Ser1489, Ser1494, and Ser1499.

The protein belongs to the TRAFAC class myosin-kinesin ATPase superfamily. Myosin family. As to quaternary structure, myosin II heavy chain is two-headed. It self-assembles into filaments. Hexamer of 2 heavy chain subunits (MHC), 2 alkali light chain subunits (MLC) and 2 regulatory light chain subunits (MLC-2).

Functionally, myosin is a protein that binds to F-actin and has ATPase activity that is activated by F-actin. This Acanthamoeba castellanii (Amoeba) protein is Myosin-2 heavy chain, non muscle.